The following is a 357-amino-acid chain: Selenide, water dikinase (357 aa).

Cys25 is an active-site residue. ATP contacts are provided by residues Lys28 and 57–59 (TAD). Mg(2+) is bound at residue Asp60. ATP contacts are provided by residues Asp77, Asp100, and 148-150 (GHS). Asp100 serves as a coordination point for Mg(2+). Asp236 provides a ligand contact to Mg(2+).

The protein belongs to the selenophosphate synthase 1 family. Class I subfamily. Homodimer. It depends on Mg(2+) as a cofactor.

The enzyme catalyses hydrogenselenide + ATP + H2O = selenophosphate + AMP + phosphate + 2 H(+). Functionally, synthesizes selenophosphate from selenide and ATP. The polypeptide is Selenide, water dikinase (Pseudomonas straminea).